A 343-amino-acid chain; its full sequence is Methionine import ATP-binding protein MetN 2 (343 aa).

Positions 2–241 (IEFKDVTKTF…PQQAVTKRFV (240 aa)) constitute an ABC transporter domain. 38 to 45 (GYSGAGKS) is a binding site for ATP.

Belongs to the ABC transporter superfamily. Methionine importer (TC 3.A.1.24) family. The complex is composed of two ATP-binding proteins (MetN), two transmembrane proteins (MetI) and a solute-binding protein (MetQ).

The protein localises to the cell membrane. It carries out the reaction L-methionine(out) + ATP + H2O = L-methionine(in) + ADP + phosphate + H(+). The catalysed reaction is D-methionine(out) + ATP + H2O = D-methionine(in) + ADP + phosphate + H(+). Functionally, part of the ABC transporter complex MetNIQ involved in methionine import. Responsible for energy coupling to the transport system. This chain is Methionine import ATP-binding protein MetN 2, found in Lactiplantibacillus plantarum (strain ATCC BAA-793 / NCIMB 8826 / WCFS1) (Lactobacillus plantarum).